Consider the following 201-residue polypeptide: Orotate phosphoribosyltransferase (201 aa).

113–121 (EDIITTGKS) provides a ligand contact to 5-phospho-alpha-D-ribose 1-diphosphate. Positions 117 and 145 each coordinate orotate.

Belongs to the purine/pyrimidine phosphoribosyltransferase family. PyrE subfamily. As to quaternary structure, homodimer. The cofactor is Mg(2+).

The enzyme catalyses orotidine 5'-phosphate + diphosphate = orotate + 5-phospho-alpha-D-ribose 1-diphosphate. It functions in the pathway pyrimidine metabolism; UMP biosynthesis via de novo pathway; UMP from orotate: step 1/2. Catalyzes the transfer of a ribosyl phosphate group from 5-phosphoribose 1-diphosphate to orotate, leading to the formation of orotidine monophosphate (OMP). The protein is Orotate phosphoribosyltransferase of Helicobacter pylori (strain G27).